A 149-amino-acid chain; its full sequence is Arginine repressor (149 aa).

Belongs to the ArgR family.

Its subcellular location is the cytoplasm. It functions in the pathway amino-acid biosynthesis; L-arginine biosynthesis [regulation]. Regulates arginine biosynthesis genes. This chain is Arginine repressor, found in Bacillus pumilus (strain SAFR-032).